Reading from the N-terminus, the 426-residue chain is MTVTEVAPQALPFQELQEKILPELHLLAAGLGIENYRKLKKDALALAIMEKQADAEGQSLARGYLDITSDGYGFLQADLLDPASRSVLVTAGVIKQYHLRTGDEVIGRARKPRENERYGSLVRVEAVNGLDPEAARQRPRFDDLTPTFPDQQLVLEDPSTDDGLSLRVVDLLVPIGRGQRALIVAPPKAGKTTLLKKIANSITKNYPDVTVMVLLVDERPEEVTDFRESVQGAQVIASTFDEPPQHHVRVAEFVHERARRIVEEGGHVVILLDSITRLARANNLVTPPTGRTLSGGLDSNALHWPKRFLGAARNIREGGSLTILATALVETGSRMDDVIFEEFKGTGNAELVLSRRLEERRIFPALDILKSGTRREELLLQPEVLKKMWLLRKVISDMDPADAMEMLLGRMGKTRNNVEFLAALAG.

Residues 58–131 form the Rho RNA-BD domain; sequence QSLARGYLDI…VRVEAVNGLD (74 aa). ATP contacts are provided by residues 176–181, 188–193, and Arg-219; these read GRGQRA and KAGKTT.

Belongs to the Rho family. As to quaternary structure, homohexamer. The homohexamer assembles into an open ring structure.

In terms of biological role, facilitates transcription termination by a mechanism that involves Rho binding to the nascent RNA, activation of Rho's RNA-dependent ATPase activity, and release of the mRNA from the DNA template. The chain is Transcription termination factor Rho from Deinococcus radiodurans (strain ATCC 13939 / DSM 20539 / JCM 16871 / CCUG 27074 / LMG 4051 / NBRC 15346 / NCIMB 9279 / VKM B-1422 / R1).